A 107-amino-acid polypeptide reads, in one-letter code: Putative pterin-4-alpha-carbinolamine dehydratase (107 aa).

The protein belongs to the pterin-4-alpha-carbinolamine dehydratase family.

It carries out the reaction (4aS,6R)-4a-hydroxy-L-erythro-5,6,7,8-tetrahydrobiopterin = (6R)-L-erythro-6,7-dihydrobiopterin + H2O. This is Putative pterin-4-alpha-carbinolamine dehydratase from Paracoccus denitrificans (strain Pd 1222).